The sequence spans 723 residues: Fatty acid oxidation complex subunit alpha (723 aa).

The interval 1–189 (MIYQAETLQV…KIGLLDAVVD (189 aa)) is enoyl-CoA hydratase/isomerase. D296 contributes to the substrate binding site. A 3-hydroxyacyl-CoA dehydrogenase region spans residues 311-723 (NKETQRAAVL…FYGAQQQGSI (413 aa)). Residues M325, D344, 401–403 (VVE), K408, and S430 contribute to the NAD(+) site. The For 3-hydroxyacyl-CoA dehydrogenase activity role is filled by H451. An NAD(+)-binding site is contributed by N454. 2 residues coordinate substrate: N501 and Y661.

In the N-terminal section; belongs to the enoyl-CoA hydratase/isomerase family. This sequence in the C-terminal section; belongs to the 3-hydroxyacyl-CoA dehydrogenase family. Heterotetramer of two alpha chains (FadB) and two beta chains (FadA).

It carries out the reaction a (3S)-3-hydroxyacyl-CoA + NAD(+) = a 3-oxoacyl-CoA + NADH + H(+). The catalysed reaction is a (3S)-3-hydroxyacyl-CoA = a (2E)-enoyl-CoA + H2O. The enzyme catalyses a 4-saturated-(3S)-3-hydroxyacyl-CoA = a (3E)-enoyl-CoA + H2O. It catalyses the reaction (3S)-3-hydroxybutanoyl-CoA = (3R)-3-hydroxybutanoyl-CoA. It carries out the reaction a (3Z)-enoyl-CoA = a 4-saturated (2E)-enoyl-CoA. The catalysed reaction is a (3E)-enoyl-CoA = a 4-saturated (2E)-enoyl-CoA. The protein operates within lipid metabolism; fatty acid beta-oxidation. Functionally, involved in the aerobic and anaerobic degradation of long-chain fatty acids via beta-oxidation cycle. Catalyzes the formation of 3-oxoacyl-CoA from enoyl-CoA via L-3-hydroxyacyl-CoA. It can also use D-3-hydroxyacyl-CoA and cis-3-enoyl-CoA as substrate. The sequence is that of Fatty acid oxidation complex subunit alpha from Vibrio vulnificus (strain YJ016).